We begin with the raw amino-acid sequence, 306 residues long: Pantothenate kinase (306 aa).

Residue 90–97 participates in ATP binding; it reads GSVAVGKS.

It belongs to the prokaryotic pantothenate kinase family.

It is found in the cytoplasm. The catalysed reaction is (R)-pantothenate + ATP = (R)-4'-phosphopantothenate + ADP + H(+). It functions in the pathway cofactor biosynthesis; coenzyme A biosynthesis; CoA from (R)-pantothenate: step 1/5. In Lactococcus lactis subsp. cremoris (strain MG1363), this protein is Pantothenate kinase.